The chain runs to 365 residues: Inositol 4-methyltransferase (365 aa).

Aspartate 232 is an S-adenosyl-L-methionine binding site. Histidine 270 acts as the Proton acceptor in catalysis.

Belongs to the class I-like SAM-binding methyltransferase superfamily. Cation-independent O-methyltransferase family. In terms of tissue distribution, leaves and roots. The levels found in the leaves are 25 times greater than in the roots.

The catalysed reaction is myo-inositol + S-adenosyl-L-methionine = 1D-4-O-methyl-myo-inositol + S-adenosyl-L-homocysteine + H(+). Its pathway is polyol metabolism; myo-inositol metabolism. In terms of biological role, catalyzes the methylation of myo-inositol into ononitol (1D-4-O-methyl myo-inositol), the first step in the biosynthesis of the cyclic sugar pinitol which has osmoprotective properties. The sequence is that of Inositol 4-methyltransferase (IMT1) from Mesembryanthemum crystallinum (Common ice plant).